The chain runs to 478 residues: Glutamate--tRNA ligase 1 (478 aa).

Positions Pro10–Gly20 match the 'HIGH' region motif. The 'KMSKS' region signature appears at Lys242–Arg246. Residue Lys245 coordinates ATP.

Belongs to the class-I aminoacyl-tRNA synthetase family. Glutamate--tRNA ligase type 1 subfamily. Monomer.

The protein resides in the cytoplasm. It carries out the reaction tRNA(Glu) + L-glutamate + ATP = L-glutamyl-tRNA(Glu) + AMP + diphosphate. Its function is as follows. Catalyzes the attachment of glutamate to tRNA(Glu) in a two-step reaction: glutamate is first activated by ATP to form Glu-AMP and then transferred to the acceptor end of tRNA(Glu). The protein is Glutamate--tRNA ligase 1 of Orientia tsutsugamushi (strain Boryong) (Rickettsia tsutsugamushi).